Here is a 224-residue protein sequence, read N- to C-terminus: Small ribosomal subunit protein uS3 (224 aa).

The KH type-2 domain occupies 39 to 107 (VRKYIQNALA…PVHINIEEIR (69 aa)).

This sequence belongs to the universal ribosomal protein uS3 family. In terms of assembly, part of the 30S ribosomal subunit. Forms a tight complex with proteins S10 and S14.

Its function is as follows. Binds the lower part of the 30S subunit head. Binds mRNA in the 70S ribosome, positioning it for translation. The protein is Small ribosomal subunit protein uS3 of Saccharophagus degradans (strain 2-40 / ATCC 43961 / DSM 17024).